The sequence spans 225 residues: Small ribosomal subunit protein uS3 (225 aa).

In terms of domain architecture, KH type-2 spans 38 to 106; sequence LRKFLQGKLQ…EVSLNIVEIR (69 aa).

Belongs to the universal ribosomal protein uS3 family. Part of the 30S ribosomal subunit. Forms a tight complex with proteins S10 and S14.

Its function is as follows. Binds the lower part of the 30S subunit head. Binds mRNA in the 70S ribosome, positioning it for translation. This chain is Small ribosomal subunit protein uS3, found in Rhodospirillum centenum (strain ATCC 51521 / SW).